We begin with the raw amino-acid sequence, 132 residues long: Global transcriptional regulator Spx (132 aa).

Cysteines 10 and 13 form a disulfide.

It belongs to the ArsC family. Spx subfamily. Interacts with the C-terminal domain of the alpha subunit of the RNAP.

It is found in the cytoplasm. Functionally, global transcriptional regulator that plays a key role in stress response and exerts either positive or negative regulation of genes. Acts by interacting with the C-terminal domain of the alpha subunit of the RNA polymerase (RNAP). This interaction can enhance binding of RNAP to the promoter region of target genes and stimulate their transcription, or block interaction of RNAP with activator. The chain is Global transcriptional regulator Spx from Enterococcus faecalis (strain ATCC 700802 / V583).